Reading from the N-terminus, the 337-residue chain is Probable cytosolic iron-sulfur protein assembly protein 1 (337 aa).

WD repeat units follow at residues 11-50 (LHND…ENLL), 57-96 (VHKK…LEEG), 109-148 (GHEN…EEYE), 155-194 (EHSQ…WECA), 199-240 (GHEG…EDDQ), 252-290 (AHRS…SEVS), and 301-337 (AHTV…NYQD).

It belongs to the WD repeat CIA1 family. Interacts with NAR1.

The protein resides in the cytoplasm. It is found in the nucleus. Essential component of the cytosolic iron-sulfur (Fe/S) protein assembly machinery. Required for the maturation of extramitochondrial Fe/S proteins. In Candida glabrata (strain ATCC 2001 / BCRC 20586 / JCM 3761 / NBRC 0622 / NRRL Y-65 / CBS 138) (Yeast), this protein is Probable cytosolic iron-sulfur protein assembly protein 1.